The primary structure comprises 254 residues: D-aminoacyl-tRNA deacylase (254 aa).

Residues 61 to 82 are disordered; the sequence is KPTLTVHTPGNLTDDNSHGGNP. Positions 65–74 are enriched in polar residues; that stretch reads TVHTPGNLTD.

The protein belongs to the DtdA deacylase family. As to quaternary structure, monomer. Zn(2+) is required as a cofactor.

It carries out the reaction a D-aminoacyl-tRNA + H2O = a tRNA + a D-alpha-amino acid + H(+). The catalysed reaction is glycyl-tRNA(Ala) + H2O = tRNA(Ala) + glycine + H(+). D-aminoacyl-tRNA deacylase with broad substrate specificity. By recycling D-aminoacyl-tRNA to D-amino acids and free tRNA molecules, this enzyme counteracts the toxicity associated with the formation of D-aminoacyl-tRNA entities in vivo. In Methanococcus maripaludis (strain DSM 14266 / JCM 13030 / NBRC 101832 / S2 / LL), this protein is D-aminoacyl-tRNA deacylase.